The primary structure comprises 99 residues: Duplicate procyclin (99 aa).

The sequence is that of Duplicate procyclin from Trypanosoma brucei brucei.